Here is a 67-residue protein sequence, read N- to C-terminus: Large ribosomal subunit protein bL31 (67 aa).

Zn(2+) is bound by residues Cys16, Cys18, Cys37, and Cys40.

Belongs to the bacterial ribosomal protein bL31 family. Type A subfamily. In terms of assembly, part of the 50S ribosomal subunit. Requires Zn(2+) as cofactor.

Its function is as follows. Binds the 23S rRNA. The protein is Large ribosomal subunit protein bL31 of Methylococcus capsulatus (strain ATCC 33009 / NCIMB 11132 / Bath).